The chain runs to 704 residues: Polyribonucleotide nucleotidyltransferase (704 aa).

Mg(2+) is bound by residues D487 and D493. In terms of domain architecture, KH spans 554–613; it reads PRLLTIKIHPDKIREVIGKGGSTIQAITKETGTQIDIQDDGTIIIASVNAIAAQAAKSRI. The region spanning 623–691 is the S1 motif domain; sequence GRIYEGKVAK…KQGRIRLSIK (69 aa).

It belongs to the polyribonucleotide nucleotidyltransferase family. As to quaternary structure, component of the RNA degradosome, which is a multiprotein complex involved in RNA processing and mRNA degradation. The cofactor is Mg(2+).

It is found in the cytoplasm. The catalysed reaction is RNA(n+1) + phosphate = RNA(n) + a ribonucleoside 5'-diphosphate. Involved in mRNA degradation. Catalyzes the phosphorolysis of single-stranded polyribonucleotides processively in the 3'- to 5'-direction. This is Polyribonucleotide nucleotidyltransferase from Xanthomonas campestris pv. campestris (strain B100).